The chain runs to 304 residues: MADKLIRATAADGGIRVVGVITTRLTEEARQRHKLSNVATAALGRTMASALLLASSLKKPGSRVNIRIKGDGPLGGVLVDAGLDGTVRGYVDYPQVELLPNAQGKLDVGRAVGDKGYVRVLREEKGEGRNELQESIVEIVSGEVGEDIAYYLDQSEQIPSALQVGVFVGTTTGVTAAGGILLQVLSKEASRDEVLVARLESRLRKLTGFTPLLRAGKGLEDIFQELLGDMGLEIFPAVQMLRFDCDCSFERALGALKFLGVDELKDIIEKDKQAEAICEFCREVYNANERQLIELVESLQAESC.

Disulfide bonds link cysteine 245/cysteine 247 and cysteine 278/cysteine 281.

It belongs to the HSP33 family. In terms of processing, under oxidizing conditions two disulfide bonds are formed involving the reactive cysteines. Under reducing conditions zinc is bound to the reactive cysteines and the protein is inactive.

Its subcellular location is the cytoplasm. Redox regulated molecular chaperone. Protects both thermally unfolding and oxidatively damaged proteins from irreversible aggregation. Plays an important role in the bacterial defense system toward oxidative stress. This is 33 kDa chaperonin from Microcystis aeruginosa (strain NIES-843 / IAM M-2473).